A 127-amino-acid chain; its full sequence is Glycine cleavage system H protein (127 aa).

Positions 24–105 constitute a Lipoyl-binding domain; sequence TALVGITDFA…YNEGWIVKMK (82 aa). An N6-lipoyllysine modification is found at Lys-65.

Belongs to the GcvH family. As to quaternary structure, the glycine cleavage system is composed of four proteins: P, T, L and H. (R)-lipoate is required as a cofactor.

Its function is as follows. The glycine cleavage system catalyzes the degradation of glycine. The H protein shuttles the methylamine group of glycine from the P protein to the T protein. The polypeptide is Glycine cleavage system H protein (Chlorobaculum tepidum (strain ATCC 49652 / DSM 12025 / NBRC 103806 / TLS) (Chlorobium tepidum)).